Reading from the N-terminus, the 485-residue chain is Adenosylhomocysteinase (485 aa).

Threonine 64, aspartate 139, and glutamate 205 together coordinate substrate. NAD(+) is bound at residue 206-208 (TTT). Positions 235 and 239 each coordinate substrate. Residues asparagine 240, 269–274 (GYGDVG), glutamate 292, asparagine 327, 348–350 (IGH), and asparagine 397 contribute to the NAD(+) site.

It belongs to the adenosylhomocysteinase family. Homotetramer. It depends on NAD(+) as a cofactor.

The enzyme catalyses S-adenosyl-L-homocysteine + H2O = L-homocysteine + adenosine. It functions in the pathway amino-acid biosynthesis; L-homocysteine biosynthesis; L-homocysteine from S-adenosyl-L-homocysteine: step 1/1. In terms of biological role, adenosylhomocysteine is a competitive inhibitor of S-adenosyl-L-methionine-dependent methyl transferase reactions; therefore adenosylhomocysteinase may play a key role in the control of methylations via regulation of the intracellular concentration of adenosylhomocysteine. The sequence is that of Adenosylhomocysteinase (SAHH) from Catharanthus roseus (Madagascar periwinkle).